The chain runs to 354 residues: Peptide chain release factor 1 (354 aa).

Q230 is modified (N5-methylglutamine). The segment at 282–301 (KQASDAIKKQMIGSGDRSER) is disordered.

It belongs to the prokaryotic/mitochondrial release factor family. Methylated by PrmC. Methylation increases the termination efficiency of RF1.

Its subcellular location is the cytoplasm. Peptide chain release factor 1 directs the termination of translation in response to the peptide chain termination codons UAG and UAA. In Leptospira borgpetersenii serovar Hardjo-bovis (strain L550), this protein is Peptide chain release factor 1.